A 331-amino-acid polypeptide reads, in one-letter code: Phenylalanine--tRNA ligase alpha subunit (331 aa).

Position 252 (Glu-252) interacts with Mg(2+).

It belongs to the class-II aminoacyl-tRNA synthetase family. Phe-tRNA synthetase alpha subunit type 1 subfamily. As to quaternary structure, tetramer of two alpha and two beta subunits. It depends on Mg(2+) as a cofactor.

It is found in the cytoplasm. The catalysed reaction is tRNA(Phe) + L-phenylalanine + ATP = L-phenylalanyl-tRNA(Phe) + AMP + diphosphate + H(+). This chain is Phenylalanine--tRNA ligase alpha subunit, found in Marinomonas sp. (strain MWYL1).